A 1862-amino-acid chain; its full sequence is Transient receptor potential cation channel subfamily M member 7 (1862 aa).

Methionine 1 carries the N-acetylmethionine modification. Residues 1 to 850 (MSQKSWIEST…ITRKFYAFYH (850 aa)) lie on the Cytoplasmic side of the membrane. Serine 101 carries the post-translational modification Phosphoserine. Positions 544–554 (NRRSGRNASSS) are enriched in low complexity. Residues 544-574 (NRRSGRNASSSTPQLRKSHETFGNRADKKEK) are disordered. Over residues 560–573 (KSHETFGNRADKKE) the composition is skewed to basic and acidic residues. Residues 851-876 (APIVKFWFNTLAYLGFLMLYTFVVLV) traverse the membrane as a helical segment. The Extracellular portion of the chain corresponds to 877 to 882 (QMEQLP). The chain crosses the membrane as a helical span at residues 883–904 (SVQEWIVIAYIFTYAIEKIREV). Residues 905 to 923 (FMSEAGKISQKIKVWFSDY) are Cytoplasmic-facing. A helical membrane pass occupies residues 924–943 (FNVSDTIAIISFFVGFGLRF). Residues 944 to 956 (GAKWNYINAYDNH) lie on the Extracellular side of the membrane. A helical transmembrane segment spans residues 957–980 (VFVAGRLIYCLNIIFWYVRLLDFL). Residues 981–999 (AVNQQAGPYVMMIGKMVAN) lie on the Cytoplasmic side of the membrane. Residues 1000–1023 (MFYIVVIMALVLLSFGVPRKAILY) traverse the membrane as a helical segment. Residues 1024 to 1025 (PH) are Extracellular-facing. The pore-forming intramembrane region spans 1026–1066 (EEPSWSLAKDIVFHPYWMIFGEVYAYEIDVCANDSALPTIC). The Extracellular portion of the chain corresponds to 1067 to 1069 (GPG). A helical transmembrane segment spans residues 1070–1098 (TWLTPFLQAVYLFVQYIIMVNLLIAFFNN). Over 1099 to 1862 (VYLQVKAISN…EATNSVRLML (764 aa)) the chain is Cytoplasmic. 3 S-palmitoyl cysteine lipidation sites follow: cysteine 1143, cysteine 1144, and cysteine 1146. Residue threonine 1163 is modified to Phosphothreonine. Phosphoserine is present on residues serine 1191, serine 1193, serine 1224, serine 1255, and serine 1258. The stretch at 1198 to 1250 (RVTFERVEQMSIQIKEVGDRVNYIKRSLQSLDSQIGHLQDLSALTVDTLKTLT) forms a coiled coil. The residue at position 1265 (threonine 1265) is a Phosphothreonine. Phosphoserine occurs at positions 1300, 1357, 1360, 1385, 1386, 1389, 1394, 1395, and 1403. The tract at residues 1380 to 1418 (NQKLGSSPNSSPHMSSPPTKFSVSTPSQPSCKSHLESTT) is disordered. The span at 1385-1397 (SSPNSSPHMSSPP) shows a compositional bias: low complexity. Over residues 1398–1410 (TKFSVSTPSQPSC) the composition is skewed to polar residues. Position 1404 is a phosphothreonine (threonine 1404). Residues serine 1406 and serine 1445 each carry the phosphoserine modification. Residue threonine 1454 is modified to Phosphothreonine. Serine 1455 carries the phosphoserine modification. 2 positions are modified to phosphothreonine: threonine 1466 and threonine 1470. A disordered region spans residues 1485–1511 (TPTSLHSEQESCSRRASTEDSPDVDSR). Serine 1491, serine 1497, serine 1501, serine 1510, and serine 1530 each carry phosphoserine. Residues 1491 to 1502 (SEQESCSRRAST) show a composition bias toward basic and acidic residues. Threonine 1534 is modified (phosphothreonine). At serine 1540 the chain carries Phosphoserine. The residue at position 1548 (threonine 1548) is a Phosphothreonine. 2 positions are modified to phosphoserine: serine 1564 and serine 1566. Position 1580 is a phosphothreonine (threonine 1580). Residues 1591-1821 (ILNNSMSSWS…CCRKLKLPDL (231 aa)) enclose the Alpha-type protein kinase domain. Phosphoserine is present on residues serine 1595 and serine 1612. ADP-binding residues include glycine 1618, glycine 1619, leucine 1620, arginine 1621, and lysine 1645. Serine 1657 bears the Phosphoserine mark. The residue at position 1682 (threonine 1682) is a Phosphothreonine. Residues glutamate 1717, glutamate 1718, and methionine 1720 each contribute to the ADP site. Histidine 1750 contacts Zn(2+). Residue aspartate 1764 is the Proton acceptor of the active site. Position 1774 (aspartate 1774) interacts with ADP. Serine 1776 is modified (phosphoserine). Zn(2+) is bound by residues histidine 1807, cysteine 1809, and cysteine 1813. Threonine 1827 carries the phosphothreonine modification. The disordered stretch occupies residues 1840-1862 (DLNLQAGNSTKESEATNSVRLML). 2 positions are modified to phosphoserine: serine 1848 and serine 1857.

It in the C-terminal section; belongs to the protein kinase superfamily. Alpha-type protein kinase family. ALPK subfamily. This sequence in the N-terminal section; belongs to the transient receptor (TC 1.A.4) family. LTrpC subfamily. TRPM7 sub-subfamily. In terms of assembly, homodimer. Homotetramer. Forms heteromers with TRPM6; heteromeric channels are functionally different from the homomeric channels. Interacts with PLCB1. Zn(2+) is required as a cofactor. Post-translationally, palmitoylated; palmitoylation at Cys-1143, Cys-1144 and Cys-1146 promotes TRPM7 trafficking from the Golgi to the surface membrane. In terms of processing, autophosphorylated; autophosphorylation regulates TRPM7 kinase activity towards its substrates. The C-terminal kinase domain can be cleaved from the channel segment in a cell-type-specific fashion. TRPM7 is cleaved by caspase-8, dissociating the kinase from the ion-conducting pore. The cleaved kinase fragments (M7CKs) can translocate to the cell nucleus and binds chromatin-remodeling complex proteins in a Zn(2+)-dependent manner to ultimately phosphorylate specific Ser/Thr residues of histones.

It localises to the cell membrane. It is found in the cytoplasmic vesicle membrane. Its subcellular location is the nucleus. The enzyme catalyses L-seryl-[protein] + ATP = O-phospho-L-seryl-[protein] + ADP + H(+). It catalyses the reaction L-threonyl-[protein] + ATP = O-phospho-L-threonyl-[protein] + ADP + H(+). It carries out the reaction Mg(2+)(in) = Mg(2+)(out). The catalysed reaction is Ca(2+)(in) = Ca(2+)(out). The enzyme catalyses Zn(2+)(in) = Zn(2+)(out). Its activity is regulated as follows. Channel displays constitutive activity. Channel activity is negatively regulated by cytosolic Mg(2+), Mg-ATP, low intracellular pH. Resting free cytosolic Mg(2+) and Mg-ATP concentrations seem to be sufficient to block native TRPM7 channel activity. TRPM7 channel activity is highly dependent on membrane levels of phosphatidylinositol 4,5 bisphosphate (PIP2). PIP2 hydrolysis negatively regulates TRPM7 channel activity. TRPM7 kinase activity does not affect channel activity. The kinase activity is controlled through the autophosphorylation of a serine/threonine-rich region located N-terminal to the catalytic domain. Bifunctional protein that combines an ion channel with an intrinsic kinase domain, enabling it to modulate cellular functions either by conducting ions through the pore or by phosphorylating downstream proteins via its kinase domain. The channel is highly permeable to divalent cations, specifically calcium (Ca2+), magnesium (Mg2+) and zinc (Zn2+) and mediates their influx. Controls a wide range of biological processes such as Ca2(+), Mg(2+) and Zn(2+) homeostasis, vesicular Zn(2+) release channel and intracellular Ca(2+) signaling, embryonic development, immune responses, cell motility, proliferation and differentiation. The C-terminal alpha-kinase domain autophosphorylates cytoplasmic residues of TRPM7. TRPM7 phosphorylates SMAD2, suggesting that TRPM7 kinase may play a role in activating SMAD signaling pathways. In vitro, TRPM7 kinase phosphorylates ANXA1 (annexin A1), myosin II isoforms and a variety of proteins with diverse cellular functions. In terms of biological role, the cleaved channel exhibits substantially higher current and potentiates Fas receptor signaling. Its function is as follows. The C-terminal kinase domain can be cleaved from the channel segment in a cell-type-specific fashion. In immune cells, the TRPM7 kinase domain is clipped from the channel domain by caspases in response to Fas-receptor stimulation. The cleaved kinase fragments can translocate to the nucleus, and bind chromatin-remodeling complex proteins in a Zn(2+)-dependent manner to ultimately phosphorylate specific Ser/Thr residues of histones known to be functionally important for cell differentiation and embryonic development. This chain is Transient receptor potential cation channel subfamily M member 7, found in Rattus norvegicus (Rat).